The chain runs to 77 residues: Large ribosomal subunit protein uL29 (77 aa).

Belongs to the universal ribosomal protein uL29 family.

This Methanopyrus kandleri (strain AV19 / DSM 6324 / JCM 9639 / NBRC 100938) protein is Large ribosomal subunit protein uL29.